Reading from the N-terminus, the 424-residue chain is WD-40 repeat-containing protein MSI3 (424 aa).

Methionine 1 is subject to N-acetylmethionine. 5 WD repeats span residues 167–207 (GHEQ…TDKV), 216–256 (GHQS…MQHQ), 259–299 (VHER…APLH), 303–343 (KHEG…DEQL), and 362–402 (GHKA…YRED). The short motif at 233 to 249 (IFGSAGDDCQLVIWDLR) is the DWD box element. The segment at 394-424 (MAESIYREDDEDEDDDDEGNQNAQHSNENQK) is disordered. Acidic residues predominate over residues 401–412 (EDDEDEDDDDEG). Residues 413–424 (NQNAQHSNENQK) are compositionally biased toward polar residues.

The protein belongs to the WD repeat RBAP46/RBAP48/MSI1 family.

The protein resides in the nucleus. Core histone-binding subunit that may target chromatin assembly factors, chromatin remodeling factors and histone deacetylases to their histone substrates in a manner that is regulated by nucleosomal DNA. The protein is WD-40 repeat-containing protein MSI3 (MSI3) of Arabidopsis thaliana (Mouse-ear cress).